The primary structure comprises 172 residues: Myosin regulatory light polypeptide 9 (172 aa).

A compositionally biased stretch (basic residues) spans 1–16 (MSSKRAKAKTTKKRPQ). A disordered region spans residues 1 to 20 (MSSKRAKAKTTKKRPQRATS). Serine 2 carries the N-acetylserine modification. Threonine 19 carries the phosphothreonine; by MLCK, CIT and ROCK2 modification. A Phosphoserine; by CDC42BP, CIT, MLCK, PAK1, ROCK1, ROCK2, DAPK1, DAPK2 and ZIPK/DAPK3 modification is found at serine 20. EF-hand domains lie at 29 to 64 (SQIQ…LGKN), 98 to 133 (DPED…MGDR), and 134 to 169 (FTDE…GAKD). Ca(2+) contacts are provided by aspartate 42, asparagine 44, aspartate 46, and aspartate 53.

As to quaternary structure, myosin is a hexamer of 2 heavy chains and 4 light chains: interacts with myosin heavy chain MYO19. Interacts with LUZP1; the interaction results in inhibition of phosphorylation of MYL9 by DAPK3. Phosphorylation increases the actin-activated myosin ATPase activity and thereby regulates the contractile activity. It is required to generate the driving force in the migration of the cells but not necessary for localization of myosin-2 at the leading edge. Phosphorylation is required for myotube formation. Phosphorylated by DAPK3; DAPK3-mediated phosphorylation is inhibited by LUZP1.

The protein resides in the cytoplasm. The protein localises to the cytoskeleton. Its subcellular location is the cell cortex. Myosin regulatory subunit that plays an important role in regulation of both smooth muscle and nonmuscle cell contractile activity via its phosphorylation. Implicated in cytokinesis, receptor capping, and cell locomotion. In myoblasts, regulates PIEZO1-dependent cortical actomyosin assembly involved in myotube formation. This Mus musculus (Mouse) protein is Myosin regulatory light polypeptide 9 (Myl9).